The sequence spans 663 residues: Probable potassium transport system protein Kup (663 aa).

Residues 1–23 form a disordered region; that stretch reads MSDNPSSRAGPEVVPTPPPSPAA. 12 helical membrane-spanning segments follow: residues 81–101, 137–157, 173–193, 201–221, 224–244, 248–268, 283–303, 315–335, 373–393, 399–419, 433–453, and 455–475; these read PANV…VVTF, LLII…VITP, PALE…LFFI, VGAV…ILGV, ILFD…AFFA, WHGF…EALY, WLLV…AILL, LLVP…AAIV, IYVP…VLGF, LAAA…LLFH, AWPL…ANIV, and VEEG…LLST.

This sequence belongs to the HAK/KUP transporter (TC 2.A.72) family.

It is found in the cell inner membrane. The enzyme catalyses K(+)(in) + H(+)(in) = K(+)(out) + H(+)(out). Its function is as follows. Transport of potassium into the cell. Likely operates as a K(+):H(+) symporter. The polypeptide is Probable potassium transport system protein Kup (Anaeromyxobacter sp. (strain Fw109-5)).